A 256-amino-acid polypeptide reads, in one-letter code: Small ribosomal subunit protein eS1 (256 aa).

N-acetylalanine; partial is present on alanine 2.

Belongs to the eukaryotic ribosomal protein eS1 family. Component of the small ribosomal subunit. Mature ribosomes consist of a small (40S) and a large (60S) subunit. The 40S subunit contains about 33 different proteins and 1 molecule of RNA (18S). The 60S subunit contains about 49 different proteins and 3 molecules of RNA (25S, 5.8S and 5S).

The protein resides in the cytoplasm. The polypeptide is Small ribosomal subunit protein eS1 (Laccaria bicolor (strain S238N-H82 / ATCC MYA-4686) (Bicoloured deceiver)).